We begin with the raw amino-acid sequence, 336 residues long: Glycerol-3-phosphate dehydrogenase [NAD(P)+] (336 aa).

NADPH contacts are provided by Ser11, Trp12, Arg33, Arg34, and Lys107. 2 residues coordinate sn-glycerol 3-phosphate: Lys107 and Gly137. Residue Ala141 coordinates NADPH. The sn-glycerol 3-phosphate site is built by Lys192, Asp245, Ser255, Arg256, and Asn257. Catalysis depends on Lys192, which acts as the Proton acceptor. Arg256 lines the NADPH pocket. Glu282 is an NADPH binding site.

It belongs to the NAD-dependent glycerol-3-phosphate dehydrogenase family.

The protein localises to the cytoplasm. The catalysed reaction is sn-glycerol 3-phosphate + NAD(+) = dihydroxyacetone phosphate + NADH + H(+). It carries out the reaction sn-glycerol 3-phosphate + NADP(+) = dihydroxyacetone phosphate + NADPH + H(+). It participates in membrane lipid metabolism; glycerophospholipid metabolism. Its function is as follows. Catalyzes the reduction of the glycolytic intermediate dihydroxyacetone phosphate (DHAP) to sn-glycerol 3-phosphate (G3P), the key precursor for phospholipid synthesis. The sequence is that of Glycerol-3-phosphate dehydrogenase [NAD(P)+] from Thermobifida fusca (strain YX).